The primary structure comprises 585 residues: MITRLSTLFLRTLREDPADAEVPSHKLLVRAGYIRRTAPGVYTWLPLGLRTLRKVETVVREEMDAIGAQELLFPALLPREPYEQTHRWTEYGDSLFRLKDRKGGDYLLGPTHEEMFASAVKDMYSSYKDFPVTLYQIQTKYRDEERPRAGILRGREFVMKDSYSFDMSDAGLEDSYQRHREAYQRILDRLGVEYVICAATSGAMGGSASEEFLAVSDNGEDTFVRATEGPYAANVEAVVTQPGVERPLEQAPEAVEYETPNAETIEALVQWAQSAGVTVEDRSVAAADTLKCLLVKITQPGAEEAELAGILLPGDREVDMKRLEASVEPAEVELASEEDFKNNPFLVKGYVGPRALNAHGVKVLADPRVVSGTSWIAGADAVEHHVVGLTMGRDFTVDGYIEAAEIREGDPAPEGQGTLTLARGIEVGHIFQLGRKYTEAFDVQILDESGKRAIPTMGSYGIGVSRLMAVLAEQRHDETGLNWPLEVAPYQVHVVVANKDKEAIEAGDALVAALDSHGIEVLFDDRPKVSPGVKFKDAELLGMPFVVVLGRAFKDGNIELRERGQETVLVSADEIVDTVVAKLNR.

Belongs to the class-II aminoacyl-tRNA synthetase family. ProS type 1 subfamily. Homodimer.

Its subcellular location is the cytoplasm. It catalyses the reaction tRNA(Pro) + L-proline + ATP = L-prolyl-tRNA(Pro) + AMP + diphosphate. In terms of biological role, catalyzes the attachment of proline to tRNA(Pro) in a two-step reaction: proline is first activated by ATP to form Pro-AMP and then transferred to the acceptor end of tRNA(Pro). As ProRS can inadvertently accommodate and process non-cognate amino acids such as alanine and cysteine, to avoid such errors it has two additional distinct editing activities against alanine. One activity is designated as 'pretransfer' editing and involves the tRNA(Pro)-independent hydrolysis of activated Ala-AMP. The other activity is designated 'posttransfer' editing and involves deacylation of mischarged Ala-tRNA(Pro). The misacylated Cys-tRNA(Pro) is not edited by ProRS. This chain is Proline--tRNA ligase, found in Corynebacterium diphtheriae (strain ATCC 700971 / NCTC 13129 / Biotype gravis).